Reading from the N-terminus, the 746-residue chain is Long-chain-alcohol oxidase FAO3 (746 aa).

Residues 139 to 159 form a helical membrane-spanning segment; sequence ILTPIRAAFVYIKVAFLFCFF. 233–248 contributes to the FAD binding site; that stretch reads CDVVVVGSGSGGGVAA. Catalysis depends on His-677, which acts as the Proton acceptor.

The protein belongs to the GMC oxidoreductase family.

It is found in the membrane. The catalysed reaction is a long-chain primary fatty alcohol + O2 = a long-chain fatty aldehyde + H2O2. Its function is as follows. Long-chain fatty alcohol oxidase involved in the omega-oxidation pathway of lipid degradation. The polypeptide is Long-chain-alcohol oxidase FAO3 (FAO3) (Arabidopsis thaliana (Mouse-ear cress)).